Here is a 430-residue protein sequence, read N- to C-terminus: MSSSEGNSDASAPGTPVKSSTPSSRGSSPDSPKKQEPSKKRAILNESDDDDDSRPAPRQLSDSSDDNIHPRGGGEKSSPGAGGGLFGDLSGSSDDDSDREGKPKESNTRARLSDSDAESRGSLNDLQGIVMANPDEIDEDEKAKEHVHDTEMVTGRVTLEYAADPPHFVRMPNFLSVATHPFDPQHYEEDEDDEQAKLDDEGRTRLKLRVENTLRWRVRKDENGKEIRESNAKIVKWDDGTMSLYLGNEIFEVSLVPLNSNNLPHLYVKQPTLMSAQAVLTHRMTFRPHSTDSQTHRKVTLNMADRSRKNAQVKVMDDVGQNPEITRRENARKEEESLRAHIRRTQMVRNNFKVRGPRYAGQYSDDEDMPTSSRKGKKKEAPIIGASSESEDDHADTTKKSGSDSDSDEEYRKRKQQQKKQIVTSDEESD.

The span at 1–10 shows a compositional bias: polar residues; sequence MSSSEGNSDA. Positions 1–128 are disordered; it reads MSSSEGNSDA…SRGSLNDLQG (128 aa). Low complexity predominate over residues 18–30; that stretch reads KSSTPSSRGSSPD. A compositionally biased stretch (basic and acidic residues) spans 99–119; the sequence is REGKPKESNTRARLSDSDAES. Coiled-coil stretches lie at residues 326 to 347 and 409 to 429; these read TRRE…RTQM and EEYR…DEES. A disordered region spans residues 349 to 430; sequence RNNFKVRGPR…QIVTSDEESD (82 aa).

It belongs to the LEO1 family. As to quaternary structure, component of the PAF1 complex which consists of at least cdc-73, ctr-9, leo-1, pafo-1 and rtfo-1.

The protein resides in the nucleus. It is found in the cytoplasm. In terms of biological role, component of the PAF1 complex which is a multifunctional complex involved in transcription initiation via genetic interactions with TATA-binding proteins, elongation and transcription-coupled histone modification. The chain is RNA polymerase-associated protein LEO1 from Caenorhabditis elegans.